Here is a 107-residue protein sequence, read N- to C-terminus: Small ribosomal subunit protein uS17 (107 aa).

It belongs to the universal ribosomal protein uS17 family. In terms of assembly, part of the 30S ribosomal subunit.

One of the primary rRNA binding proteins, it binds specifically to the 5'-end of 16S ribosomal RNA. This is Small ribosomal subunit protein uS17 from Nitrosopumilus maritimus (strain SCM1).